A 543-amino-acid polypeptide reads, in one-letter code: Chaperonin GroEL 2 (543 aa).

Residues 29 to 32 (TLGP), 86 to 90 (DGTTT), Gly413, and Asp495 each bind ATP. The tract at residues 524 to 543 (KPEPKENAPTGAGMGGDFDY) is disordered.

The protein belongs to the chaperonin (HSP60) family. In terms of assembly, forms a cylinder of 14 subunits composed of two heptameric rings stacked back-to-back. Interacts with the co-chaperonin GroES.

It is found in the cytoplasm. The enzyme catalyses ATP + H2O + a folded polypeptide = ADP + phosphate + an unfolded polypeptide.. In terms of biological role, together with its co-chaperonin GroES, plays an essential role in assisting protein folding. The GroEL-GroES system forms a nano-cage that allows encapsulation of the non-native substrate proteins and provides a physical environment optimized to promote and accelerate protein folding. This Acaryochloris marina (strain MBIC 11017) protein is Chaperonin GroEL 2.